A 475-amino-acid polypeptide reads, in one-letter code: Aspartyl/glutamyl-tRNA(Asn/Gln) amidotransferase subunit B (475 aa).

It belongs to the GatB/GatE family. GatB subfamily. In terms of assembly, heterotrimer of A, B and C subunits.

It carries out the reaction L-glutamyl-tRNA(Gln) + L-glutamine + ATP + H2O = L-glutaminyl-tRNA(Gln) + L-glutamate + ADP + phosphate + H(+). The enzyme catalyses L-aspartyl-tRNA(Asn) + L-glutamine + ATP + H2O = L-asparaginyl-tRNA(Asn) + L-glutamate + ADP + phosphate + 2 H(+). Allows the formation of correctly charged Asn-tRNA(Asn) or Gln-tRNA(Gln) through the transamidation of misacylated Asp-tRNA(Asn) or Glu-tRNA(Gln) in organisms which lack either or both of asparaginyl-tRNA or glutaminyl-tRNA synthetases. The reaction takes place in the presence of glutamine and ATP through an activated phospho-Asp-tRNA(Asn) or phospho-Glu-tRNA(Gln). The protein is Aspartyl/glutamyl-tRNA(Asn/Gln) amidotransferase subunit B of Chlorobium chlorochromatii (strain CaD3).